Here is a 194-residue protein sequence, read N- to C-terminus: Glycerol-3-phosphate acyltransferase (194 aa).

The next 5 membrane-spanning stretches (helical) occupy residues 4–24 (EIVLIIGAYLLGSIPTGLLLA), 78–98 (EIWVAATGLAAFLGHVYTVFL), 110–130 (LGVFIGISPLSVLAALAIFVF), 137–157 (YVSLASITAAAAIPFLVALIE), and 161–181 (LLITMSVIIAALVVFKHRENI).

The protein belongs to the PlsY family. Probably interacts with PlsX.

The protein resides in the cell inner membrane. It catalyses the reaction an acyl phosphate + sn-glycerol 3-phosphate = a 1-acyl-sn-glycero-3-phosphate + phosphate. It participates in lipid metabolism; phospholipid metabolism. Catalyzes the transfer of an acyl group from acyl-phosphate (acyl-PO(4)) to glycerol-3-phosphate (G3P) to form lysophosphatidic acid (LPA). This enzyme utilizes acyl-phosphate as fatty acyl donor, but not acyl-CoA or acyl-ACP. This chain is Glycerol-3-phosphate acyltransferase, found in Geotalea daltonii (strain DSM 22248 / JCM 15807 / FRC-32) (Geobacter daltonii).